A 90-amino-acid polypeptide reads, in one-letter code: Putative transcript Y 12 protein (90 aa).

In Homo sapiens (Human), this protein is Putative transcript Y 12 protein (TTTY12).